The chain runs to 145 residues: Polytheonamide B (145 aa).

A propeptide spanning residues 1–96 (MADSDNTPTS…DDDLDQAAGG (96 aa)) is cleaved from the precursor. Residue Thr97 is modified to 2-oxo-5,5-dimethylhexanoate. Residue Ile99 is modified to 3-methylisoleucine. Position 101 is a 3-methylvaline (Val101). A 3-methyl-D-valine modification is found at Val102. Residue Val103 is modified to 3-methylvaline. Position 104 is a D-alanine (Ala) (Ala104). Val105 is subject to 3-methylvaline. 3-methyl-D-valine occurs at positions 106 and 110. N4-methyl-D-asparagine is present on Asn112. A 3-hydroxyvaline (Thr) modification is found at Thr113. The residue at position 117 (Val117) is a 3-methylvaline. At Asn118 the chain carries N4-methyl-D-asparagine. Gln119 is subject to (3S)-3-methylglutamine. Position 120 is a 3-hydroxy-D-valine (Val120). The residue at position 124 (Asn124) is an N4-methyl-D-asparagine. Asn126 bears the (3R)-N4-methyl-3-hydroxy-D-asparagine mark. Val127 carries the 3-methylvaline modification. Val128 carries the 3-hydroxy-D-valine modification. N4-methyl-D-asparagine occurs at positions 130 and 132. The residue at position 134 (Asn134) is a (3R)-N4-methyl-3-hydroxy-D-asparagine. At Asn136 the chain carries N4-methyl-D-asparagine. Ser138 carries the post-translational modification D-serine (Ser). At Asn140 the chain carries D-asparagine. Met141 carries the post-translational modification 3,3-dimethylmethionine. Asn142 is subject to D-asparagine. Thr144 carries the post-translational modification D-threonine.

Epimerization of most, and perhaps all, L- to D-amino acids is catalyzed by PoyD, when PoyA and PoyD are coexpressed in E.coli. In terms of processing, N-methylations are catalyzed by PoyE, when PoyA and PoyE are coexpressed in E.coli. Post-translationally, to obtain 2-oxo-5,5-dimethylhexanoate, Thr-97 is firstly dehydrated by PoyF. The second step possibly corresponds to methylation by PoyB/C, and the third step may be a cleavage by PoyH/J.

Antimicrobial peptide active against Gram-positive bacteria (MIC=4-&gt;125 ug/ml). May act by forming transmembrane ion channels, since the peptide rapidly depolarizes the bacterial cytoplasmic membrane, simultaneously decreasing the membrane potential and intracellular potassium contents. The protein is Polytheonamide B of Bacterium symbiont subsp. Theonella swinhoei (strain pTSMAC1).